The sequence spans 1012 residues: RNA-binding protein 26 (1012 aa).

Lys94 is covalently cross-linked (Glycyl lysine isopeptide (Lys-Gly) (interchain with G-Cter in SUMO2)). Residues 98–127 (LQHQEKDIKKEELTKEEEREKKFSRRLNHS) are a coiled coil. Lys106 is covalently cross-linked (Glycyl lysine isopeptide (Lys-Gly) (interchain with G-Cter in SUMO1); alternate). A Glycyl lysine isopeptide (Lys-Gly) (interchain with G-Cter in SUMO2); alternate cross-link involves residue Lys106. Residues 106-118 (KKEELTKEEEREK) show a composition bias toward basic and acidic residues. Residues 106 to 236 (KKEELTKEEE…PLENNYTPVS (131 aa)) form a disordered region. Ser127 bears the Phosphoserine mark. Basic and acidic residues predominate over residues 134–168 (RYRDNRSRDERKKDDRSRKRDYDRNPPRRDSYRDR). Over residues 169 to 186 (YNRRRGRSRSYSRSRSRS) the composition is skewed to basic residues. Composition is skewed to basic and acidic residues over residues 187-201 (WSKERLRDRDRDRSR) and 209-227 (RSRERDLVKPKYDLDRTDP). The segment at 288–316 (PMPKKRCRDYDEKGFCMRGDMCPFDHGSD) adopts a C3H1-type zinc-finger fold. Residues 334–388 (QPPVVEGPPPPGLPPPPPILTPPPVNLRPPVPPPGPLPPSLPPVTGPPPPLPPLQ) show a composition bias toward pro residues. Disordered regions lie at residues 334–404 (QPPV…SSVP) and 465–520 (IGLT…NFNR). Low complexity predominate over residues 394–404 (APPNSATSSVP). Ser501 is modified (phosphoserine). At Lys515 the chain carries N6-acetyllysine. Ser523 carries the phosphoserine modification. Residues 537–611 (TKLELRKVPP…RFIKVYWHRE (75 aa)) enclose the RRM 1 domain. Ser621 is modified (phosphoserine). Positions 647–667 (PVPSATTEPAEAQSATSELPQ) are disordered. 2 coiled-coil regions span residues 724 to 800 (DNNE…KSTS) and 828 to 852 (KKMQAGEEVTELRRKYTELQLEAAK). The disordered stretch occupies residues 858–889 (SGRGRGIHTRGRGTAHGRGRGRGRGRGVPGHA). Basic residues predominate over residues 862–882 (RGIHTRGRGTAHGRGRGRGRG). Positions 896–965 (RALEISAFTE…QDLKLAWNKP (70 aa)) constitute an RRM 2 domain. Residues 970-1012 (SAVDTEEAEPDEEEFQEESLVDDSLLQDDDEEEEDNESRSWRR) are disordered. Over residues 973 to 1005 (DTEEAEPDEEEFQEESLVDDSLLQDDDEEEEDN) the composition is skewed to acidic residues.

In terms of tissue distribution, expressed in testis and ovary.

Functionally, may be involved in the turnover of nuclear polyadenylated (pA+) RNA. The chain is RNA-binding protein 26 from Mus musculus (Mouse).